We begin with the raw amino-acid sequence, 78 residues long: MTEADQVRKRINELYKKKQESGLTEAEEAERKELHKQFIANFRAGFKQQLDSLVIVDDQGKDVTPDKAKQIQKKKVLR.

The protein belongs to the UPF0291 family.

It localises to the cytoplasm. The protein is UPF0291 protein Ldb1355 of Lactobacillus delbrueckii subsp. bulgaricus (strain ATCC 11842 / DSM 20081 / BCRC 10696 / JCM 1002 / NBRC 13953 / NCIMB 11778 / NCTC 12712 / WDCM 00102 / Lb 14).